Here is a 121-residue protein sequence, read N- to C-terminus: Phosphoribosyl-AMP cyclohydrolase (121 aa).

Aspartate 76 is a binding site for Mg(2+). Cysteine 77 is a Zn(2+) binding site. 2 residues coordinate Mg(2+): aspartate 78 and aspartate 80. 2 residues coordinate Zn(2+): cysteine 93 and cysteine 100.

This sequence belongs to the PRA-CH family. As to quaternary structure, homodimer. Requires Mg(2+) as cofactor. It depends on Zn(2+) as a cofactor.

The protein resides in the cytoplasm. It carries out the reaction 1-(5-phospho-beta-D-ribosyl)-5'-AMP + H2O = 1-(5-phospho-beta-D-ribosyl)-5-[(5-phospho-beta-D-ribosylamino)methylideneamino]imidazole-4-carboxamide. It participates in amino-acid biosynthesis; L-histidine biosynthesis; L-histidine from 5-phospho-alpha-D-ribose 1-diphosphate: step 3/9. Its function is as follows. Catalyzes the hydrolysis of the adenine ring of phosphoribosyl-AMP. The protein is Phosphoribosyl-AMP cyclohydrolase of Methanococcoides burtonii (strain DSM 6242 / NBRC 107633 / OCM 468 / ACE-M).